A 310-amino-acid chain; its full sequence is Calcium homeostasis modulator protein 5 (310 aa).

Helical transmembrane passes span 17-37, 49-69, 101-121, and 181-201; these read TIGYSVMAILTIGSERIFSMV, FPYGICFLLGPAVVLLVVGFF, LIKVLYGACVAPVMWLTVALL, and QILGWSVIITAVVIALIGTCY.

Belongs to the CALHM family.

The protein resides in the membrane. Functionally, pore-forming subunit of a voltage-gated ion channel. The polypeptide is Calcium homeostasis modulator protein 5 (calhm5.1) (Danio rerio (Zebrafish)).